Here is a 236-residue protein sequence, read N- to C-terminus: Eukaryotic translation initiation factor 3 subunit J (236 aa).

Residues 1–65 (MADDWESAAD…APAKPKPNKA (65 aa)) are disordered. The segment covering 28 to 46 (GEDEDEDIKDSWEDEEEKK) has biased composition (acidic residues). Over residues 47–58 (DEEKPTKTEAPA) the composition is skewed to basic and acidic residues.

The protein belongs to the eIF-3 subunit J family. Component of the eukaryotic translation initiation factor 3 (eIF-3) complex. The eIF-3 complex interacts with pix.

Its subcellular location is the cytoplasm. Component of the eukaryotic translation initiation factor 3 (eIF-3) complex, which is involved in protein synthesis of a specialized repertoire of mRNAs and, together with other initiation factors, stimulates binding of mRNA and methionyl-tRNAi to the 40S ribosome. The eIF-3 complex specifically targets and initiates translation of a subset of mRNAs involved in cell proliferation. This chain is Eukaryotic translation initiation factor 3 subunit J, found in Drosophila melanogaster (Fruit fly).